A 210-amino-acid polypeptide reads, in one-letter code: MFSNIFSFDRNFYNKGFYPVAGIDEAGRGPLAGPVVAAVVILPKDSAIPYLNDSKQLSEKKREILFEIIKETALDYAVELVNNEIIDEINILQATFLAMSRAVLKLKTQPDLYLIDGNRKVHGLSFNQETIVGGDAKSACIAAASILAKVSRDKMMLEYAKQYPVYEFEKHKGYGTKKHIEALKKHGICPIHRLTFSPVNDIISQTKLNI.

The RNase H type-2 domain maps to 18-208; that stretch reads YPVAGIDEAG…VNDIISQTKL (191 aa). Residues Asp24, Glu25, and Asp116 each coordinate a divalent metal cation.

Belongs to the RNase HII family. The cofactor is Mn(2+). Mg(2+) serves as cofactor.

It is found in the cytoplasm. It catalyses the reaction Endonucleolytic cleavage to 5'-phosphomonoester.. Functionally, endonuclease that specifically degrades the RNA of RNA-DNA hybrids. This is Ribonuclease HII from Endomicrobium trichonymphae.